Reading from the N-terminus, the 268-residue chain is Ribosomal RNA large subunit methyltransferase E (268 aa).

S-adenosyl-L-methionine-binding residues include Gly50, Trp52, Asp68, Asp84, and Asp109. The active-site Proton acceptor is Lys149. One can recognise a TRAM domain in the interval Pro196–Glu254.

It belongs to the class I-like SAM-binding methyltransferase superfamily. RNA methyltransferase RlmE family.

It is found in the cytoplasm. It catalyses the reaction uridine(2552) in 23S rRNA + S-adenosyl-L-methionine = 2'-O-methyluridine(2552) in 23S rRNA + S-adenosyl-L-homocysteine + H(+). In terms of biological role, specifically methylates the uridine in position 2552 of 23S rRNA at the 2'-O position of the ribose in the fully assembled 50S ribosomal subunit. The sequence is that of Ribosomal RNA large subunit methyltransferase E from Methanosarcina mazei (strain ATCC BAA-159 / DSM 3647 / Goe1 / Go1 / JCM 11833 / OCM 88) (Methanosarcina frisia).